Reading from the N-terminus, the 328-residue chain is Zinc transporter ZIP13 (328 aa).

Over 1-7 (MPGCPCP) the chain is Lumenal. Residues 8–28 (GCGMAGPRLLFLTALALELLG) traverse the membrane as a helical segment. Over 29–68 (RAGGSQPALRSRGTATACRLDNKESESWGALLSGERLDTW) the chain is Cytoplasmic. A helical transmembrane segment spans residues 69–89 (ICSLLGSLMVGLSGVFPLLVI). Residues 90-108 (PLEMGTMLRSEAGAWHLKQ) are Lumenal-facing. Residues 109–129 (LLSFALGGLLGNVFLHLLPEA) form a helical membrane-spanning segment. Residues 130-149 (WAYTCSASPGGEGQSLQQQQ) lie on the Cytoplasmic side of the membrane. Residues 150 to 170 (QLGLWVIAGILTFLALEKMFL) traverse the membrane as a helical segment. The Lumenal portion of the chain corresponds to 171 to 199 (DSKEEGTSQVSGYLNLLANTIDNFTHGLA). Residues 200–220 (VAASFLVSKKIGLLTTMAILL) form a helical membrane-spanning segment. An XEXPHE-motif motif is present at residues 221–226 (HEIPHE). The Cytoplasmic segment spans residues 221-242 (HEIPHEVGDFAILLRAGFDRWS). A helical transmembrane segment spans residues 243 to 263 (AAKLQLSTALGGLLGAGFAIC). Residues 264–273 (TQSPKGVEET) are Lumenal-facing. Residues 274 to 294 (AAWVLPFTSGGFLYIALVNVL) traverse the membrane as a helical segment. Over 295–306 (PDLLEEEDPWRS) the chain is Cytoplasmic. Residues 307-327 (LQQLLLLCAGIVVMVLFSLFV) traverse the membrane as a helical segment. Aspartate 328 is a topological domain (lumenal).

Belongs to the ZIP transporter (TC 2.A.5) family. In terms of assembly, homodimer.

It localises to the golgi apparatus membrane. The protein resides in the cytoplasmic vesicle membrane. Its subcellular location is the endoplasmic reticulum membrane. It catalyses the reaction Zn(2+)(in) = Zn(2+)(out). Functions as a zinc transporter transporting Zn(2+) from the Golgi apparatus to the cytosol and thus influences the zinc level at least in areas of the cytosol. May regulate beige adipocyte differentiation. This Pongo abelii (Sumatran orangutan) protein is Zinc transporter ZIP13.